The sequence spans 568 residues: Potassium-transporting ATPase potassium-binding subunit (568 aa).

Transmembrane regions (helical) follow at residues 3–23, 64–84, 133–153, 179–199, 255–275, 281–301, 375–395, 418–438, 497–517, and 535–555; these read TEIL…YPLG, FLKA…VLLV, FVIM…MAGV, ILLP…TPMG, MVEC…LGFY, LGYS…FINV, FGGV…AVFI, IATF…AISS, IVLI…AGLL, and VTFA…SFFP.

The protein belongs to the KdpA family. As to quaternary structure, the system is composed of three essential subunits: KdpA, KdpB and KdpC.

Its subcellular location is the cell inner membrane. Part of the high-affinity ATP-driven potassium transport (or Kdp) system, which catalyzes the hydrolysis of ATP coupled with the electrogenic transport of potassium into the cytoplasm. This subunit binds the periplasmic potassium ions and delivers the ions to the membrane domain of KdpB through an intramembrane tunnel. The sequence is that of Potassium-transporting ATPase potassium-binding subunit from Bacteroides fragilis (strain ATCC 25285 / DSM 2151 / CCUG 4856 / JCM 11019 / LMG 10263 / NCTC 9343 / Onslow / VPI 2553 / EN-2).